Reading from the N-terminus, the 749-residue chain is Small G protein signaling modulator 3 (749 aa).

Residues 113–304 (GIPHGMRPQL…RIWDLFFYEG (192 aa)) enclose the Rab-GAP TBC domain. Ser405 is modified (phosphoserine). Positions 414–438 (EDDLEALKAKNIKQTELVADLREAI) form a coiled coil. An SH3 domain is found at 479–538 (SHRRRAKALLDFERHDDDELGFRKNDIITIISQKDEHCWVGELNGLRGWFPAKFVEVLDE). Positions 554 to 717 (GVTDLVRGTL…FAFSLSQDWE (164 aa)) constitute an RUN domain.

This sequence belongs to the small G protein signaling modulator family. Interacts with GJA1. Interaction with GJA1 induces its degradation. Interacts (via RUN domain) with NF2 (via C-terminus). Interacts with RAB3A, RAB4A, RAB5A, RAB8A, RAB11A, RAP1A, RAP1B, RAP2A, RAP2B and PDCD6I. No interaction with RAB27A. No interaction with GJB1 or GJD2. Expressed in brain, liver, kidney and testis. Moderately expressed in heart, very weakly in lung and muscle. Not expressed in spleen.

The protein resides in the cytoplasm. In terms of biological role, may play a cooperative role in NF2-mediated growth suppression of cells. May act as a modulator of small G protein RAB- and RAP-mediated neuronal signal transduction and vesicular transportation pathways. The protein is Small G protein signaling modulator 3 of Rattus norvegicus (Rat).